We begin with the raw amino-acid sequence, 473 residues long: Probable dipeptidase (473 aa).

Cys-10 is an active-site residue.

Belongs to the peptidase C69 family.

The enzyme catalyses an L-aminoacyl-L-amino acid + H2O = 2 an L-alpha-amino acid. The polypeptide is Probable dipeptidase (Latilactobacillus sakei (Lactobacillus sakei)).